The sequence spans 502 residues: 1-aminocyclopropane-1-carboxylate synthase-like protein 1 (502 aa).

Positions 15 to 35 (CPGSDSIQDLPSNKGDGLERE) are disordered. Residue Glu-106 coordinates substrate. An N6-(pyridoxal phosphate)lysine modification is found at Lys-324.

The protein belongs to the class-I pyridoxal-phosphate-dependent aminotransferase family.

Does not catalyze the synthesis of 1-aminocyclopropane-1-carboxylate but is capable of catalyzing the deamination of L-vinylglycine. The sequence is that of 1-aminocyclopropane-1-carboxylate synthase-like protein 1 (ACCS) from Bos taurus (Bovine).